Here is a 79-residue protein sequence, read N- to C-terminus: Large ribosomal subunit protein eL38 (79 aa).

This sequence belongs to the eukaryotic ribosomal protein eL38 family.

This Theileria parva (East coast fever infection agent) protein is Large ribosomal subunit protein eL38 (RPL38).